The sequence spans 566 residues: Proline--tRNA ligase (566 aa).

This sequence belongs to the class-II aminoacyl-tRNA synthetase family. ProS type 1 subfamily. Homodimer.

The protein localises to the cytoplasm. It catalyses the reaction tRNA(Pro) + L-proline + ATP = L-prolyl-tRNA(Pro) + AMP + diphosphate. Catalyzes the attachment of proline to tRNA(Pro) in a two-step reaction: proline is first activated by ATP to form Pro-AMP and then transferred to the acceptor end of tRNA(Pro). As ProRS can inadvertently accommodate and process non-cognate amino acids such as alanine and cysteine, to avoid such errors it has two additional distinct editing activities against alanine. One activity is designated as 'pretransfer' editing and involves the tRNA(Pro)-independent hydrolysis of activated Ala-AMP. The other activity is designated 'posttransfer' editing and involves deacylation of mischarged Ala-tRNA(Pro). The misacylated Cys-tRNA(Pro) is not edited by ProRS. This Bacillus mycoides (strain KBAB4) (Bacillus weihenstephanensis) protein is Proline--tRNA ligase.